The primary structure comprises 297 residues: Sirohydrochlorin cobaltochelatase CbiKP (297 aa).

Positions 1–28 (MSRHPMVTRLLCLVFSCLIILACSPAFA) are cleaved as a signal peptide. H124 is a binding site for heme. Catalysis depends on H182, which acts as the Proton acceptor. 3 residues coordinate Co(2+): H182, E212, and H244.

The protein belongs to the CbiK family. As to quaternary structure, homotetramer; dimer of dimers.

It localises to the periplasm. It carries out the reaction Co-sirohydrochlorin + 2 H(+) = sirohydrochlorin + Co(2+). The catalysed reaction is siroheme + 2 H(+) = sirohydrochlorin + Fe(2+). In terms of biological role, catalyzes the insertion of Co(2+) into sirohydrochlorin. To a lesser extent, is also able to insert Fe(2+) into sirohydrochlorin, yielding siroheme. Its periplasmic location means that it cannot participate in cobalamin biosynthesis and its genomic environment suggests it is likely to be associated with a heme or metal transport system. This chain is Sirohydrochlorin cobaltochelatase CbiKP (cbiKp), found in Nitratidesulfovibrio vulgaris (strain ATCC 29579 / DSM 644 / CCUG 34227 / NCIMB 8303 / VKM B-1760 / Hildenborough) (Desulfovibrio vulgaris).